A 398-amino-acid chain; its full sequence is Argininosuccinate synthase (398 aa).

ATP contacts are provided by residues 9 to 17 (AYSGGLDTS) and Ala36. The L-citrulline site is built by Tyr87 and Ser92. Residue Gly117 participates in ATP binding. L-aspartate contacts are provided by Thr119, Asn123, and Asp124. Asn123 is a binding site for L-citrulline. L-citrulline contacts are provided by Arg127, Ser176, Ser185, Glu261, and Tyr273.

The protein belongs to the argininosuccinate synthase family. Type 1 subfamily. In terms of assembly, homotetramer.

It localises to the cytoplasm. It catalyses the reaction L-citrulline + L-aspartate + ATP = 2-(N(omega)-L-arginino)succinate + AMP + diphosphate + H(+). It participates in amino-acid biosynthesis; L-arginine biosynthesis; L-arginine from L-ornithine and carbamoyl phosphate: step 2/3. This chain is Argininosuccinate synthase, found in Desulfotalea psychrophila (strain LSv54 / DSM 12343).